The following is a 306-amino-acid chain: Non-structural protein 3 (306 aa).

The protein is Non-structural protein 3 (Segment-7) of Banna virus (BAV).